A 291-amino-acid polypeptide reads, in one-letter code: Ribosomal RNA small subunit methyltransferase H (291 aa).

S-adenosyl-L-methionine contacts are provided by residues 36–38 (GGH), Asp-55, Ala-90, Asp-102, and Gln-109.

Belongs to the methyltransferase superfamily. RsmH family.

It localises to the cytoplasm. It catalyses the reaction cytidine(1402) in 16S rRNA + S-adenosyl-L-methionine = N(4)-methylcytidine(1402) in 16S rRNA + S-adenosyl-L-homocysteine + H(+). Functionally, specifically methylates the N4 position of cytidine in position 1402 (C1402) of 16S rRNA. The protein is Ribosomal RNA small subunit methyltransferase H of Thermosipho africanus (strain TCF52B).